The primary structure comprises 564 residues: Keratin, type II cytoskeletal 6B (564 aa).

Residues 1–11 (MASTSTTIRSH) are compositionally biased toward low complexity. Residues 1–23 (MASTSTTIRSHSSSRRGFSANSA) are disordered. The residue at position 2 (alanine 2) is an N-acetylalanine. Residues 2-162 (ASTSTTIRSH…DPAIQRVRAE (161 aa)) are head. Residues 163 to 198 (EREQIKTLNNKFASFIDKVRFLEQQNKVLDTKWTLL) are coil 1A. Positions 163-476 (EREQIKTLNN…KLLEGEECRL (314 aa)) constitute an IF rod domain. The interval 199–217 (QEQGTKTVRQNLEPLFEQY) is linker 1. The coil 1B stretch occupies residues 218 to 309 (INNLRRQLDN…ALYDAELSQM (92 aa)). The tract at residues 310 to 333 (QTHISDTSVVLSMDNNRNLDLDSI) is linker 12. The interval 334–472 (IAEVKAQYEE…ATYRKLLEGE (139 aa)) is coil 2. Residues 473 to 564 (ECRLNGEGVG…SSSSRKSYKH (92 aa)) are tail. Positions 533 to 564 (RATGGGLSSVGGGSSTIKYTTTSSSSRKSYKH) are disordered. Gly residues predominate over residues 534 to 546 (ATGGGLSSVGGGS). Positions 547 to 564 (STIKYTTTSSSSRKSYKH) are enriched in low complexity.

It belongs to the intermediate filament family. Heterodimer of a type I and a type II keratin. KRT6 isomers associate with KRT16 and/or KRT17. Constitutively expressed in distinct types of epithelia such as those in oral mucosa, esophagus, papillae of tongue and hair follicle outer root sheath.

This Homo sapiens (Human) protein is Keratin, type II cytoskeletal 6B (KRT6B).